The sequence spans 121 residues: UPF0102 protein BHWA1_02005 (121 aa).

This sequence belongs to the UPF0102 family.

The protein is UPF0102 protein BHWA1_02005 of Brachyspira hyodysenteriae (strain ATCC 49526 / WA1).